The primary structure comprises 436 residues: Repulsive guidance molecule B (436 aa).

An N-terminal signal peptide occupies residues 1–48 (MGVRAAPSCAAAPAAAGAEQSRRPGLWPPSPPPPLLLLLLLSLGLLHA). N123 is a glycosylation site (N-linked (GlcNAc...) asparagine). 2 disulfides stabilise this stretch: C142-C229 and C166-C315. N386 is a glycosylation site (N-linked (GlcNAc...) asparagine). C415 carries the GPI-anchor amidated cysteine lipid modification. Positions 416 to 436 (GGCRDLPVGLGLTCLILIMFL) are cleaved as a propeptide — removed in mature form.

The protein belongs to the repulsive guidance molecule (RGM) family. In terms of assembly, homooligomer. Interacts with DRGX. Interacts with BMP2 and BMP4. Interacts with the BMP type I receptors ACVR1, BMPR1A and BMPR1B and with the BMP type II receptor ACVR2B. The functional complex with its receptor NEO1/neogenin appears to be a heterotetramer with a 2:2 stoichiometry, RGM molecules acting as staples that bring two NEO1 receptors together without interacting themselves, this arrangement leads to activation of downstream signaling via RhoA. Post-translationally, GPI-anchored. In terms of processing, autocatalytically cleaved at low pH; the two chains remain linked via two disulfide bonds. In terms of tissue distribution, detected in neonatal and adult dorsal root ganglion sensory neurons, spinal cord, and brain (at protein level). Also expressed at high levels in retinal ganglion cells of developing mouse, extending to the optic nerve (at protein level). Expressed in testis, epididymis, ovary, uterus, and pituitary.

It localises to the cell membrane. Its subcellular location is the membrane raft. Its function is as follows. Member of the repulsive guidance molecule (RGM) family that contributes to the patterning of the developing nervous system. Acts as a bone morphogenetic protein (BMP) coreceptor that potentiates BMP signaling. Promotes neuronal adhesion. May inhibit neurite outgrowth. The polypeptide is Repulsive guidance molecule B (Mus musculus (Mouse)).